The chain runs to 1547 residues: DNA topoisomerase 2 (1547 aa).

Residues 8–30 (FNKMSSPKQNGTGEPAPAKGQKG) form a disordered region. The segment covering 9-19 (NKMSSPKQNGT) has biased composition (polar residues). ATP contacts are provided by residues Asn99, Asn128, 156–158 (SSN), and 169–176 (GRNGYGAK). Residues 351–353 (KKK) are interaction with DNA. 385–387 (QTK) is an ATP binding site. The Toprim domain occupies 463 to 580 (CTLILTEGDS…ELLKLPFLEE (118 aa)). Residues Glu469, Asp549, and Asp551 each contribute to the Mg(2+) site. Positions 723-1192 (IPSMIDGLKP…TAPMLWREDL (470 aa)) constitute a Topo IIA-type catalytic domain. The O-(5'-phospho-DNA)-tyrosine intermediate role is filled by Tyr813. The interaction with DNA stretch occupies residues 996 to 1005 (KLQTTISMTC). 4 disordered regions span residues 1107 to 1134 (TALEDDDAQESEEEEPEPDPKGKPVDPD), 1209 to 1249 (EELN…ISDD), 1261 to 1423 (KTRK…MDSD), and 1459 to 1547 (RQRR…SLSD). The segment covering 1109 to 1123 (LEDDDAQESEEEEPE) has biased composition (acidic residues). Residues 1124–1134 (PDPKGKPVDPD) are compositionally biased toward basic and acidic residues. The span at 1216-1228 (KTSKAMAGKKNRK) shows a compositional bias: basic residues. Basic and acidic residues-rich tracts occupy residues 1238-1249 (NGRRVEPKISDD) and 1294-1315 (EKPEKAEKPDKVDKAEKTDGLK). The span at 1331–1344 (TFSGSSSGEMSASD) shows a compositional bias: low complexity. Over residues 1373-1383 (DDSGSDSEPEL) the composition is skewed to acidic residues. Composition is skewed to basic and acidic residues over residues 1384 to 1394 (LDNKIDSDHEA) and 1459 to 1488 (RQRRCDTSVPPKEKAAPKRKLMNVDKDEKK). A compositionally biased stretch (basic residues) spans 1513–1528 (KGKKKTAANPKKKAKK). The segment covering 1537–1547 (DFNISDSSLSD) has biased composition (polar residues).

It belongs to the type II topoisomerase family. As to quaternary structure, homodimer. It depends on Mg(2+) as a cofactor. Mn(2+) is required as a cofactor. Ca(2+) serves as cofactor.

It is found in the nucleus. It catalyses the reaction ATP-dependent breakage, passage and rejoining of double-stranded DNA.. In terms of biological role, control of topological states of DNA by transient breakage and subsequent rejoining of DNA strands. Topoisomerase II makes double-strand breaks. This chain is DNA topoisomerase 2 (TOP2), found in Bombyx mori (Silk moth).